Reading from the N-terminus, the 299-residue chain is Nucleophosmin (299 aa).

The segment covering 125–134 has biased composition (acidic residues); the sequence is ESSDDEDEEH. The interval 125 to 247 is disordered; that stretch reads ESSDDEDEEH…TPKTPLSSEE (123 aa). A Nuclear localization signal motif is present at residues 153–158; sequence PRKKTR. The segment covering 160–187 has biased composition (acidic residues); it reads EEEEEDSDEDDDDDEDDDDEDDDEEEEE. The span at 188–197 shows a compositional bias: basic and acidic residues; that stretch reads TPVKKTDSTK. Positions 189–195 match the Nuclear localization signal motif; it reads PVKKTDS. Repeats lie at residues 218–220, 221–223, 237–239, and 240–242; these read KTP. Residues 218–242 are 4 X 3 AA repeats of K-T-P; it reads KTPKTPEQKGKQDTKPQTPKTPKTP. Residues 221-231 show a composition bias toward basic and acidic residues; sequence KTPEQKGKQDT. Residues 232–242 are compositionally biased toward low complexity; it reads KPQTPKTPKTP.

The protein belongs to the nucleoplasmin family. In terms of assembly, decamer formed by two pentameric rings associated in a head-to-head fashion. In terms of processing, phosphorylated.

The protein resides in the cytoplasm. It is found in the nucleus. Its subcellular location is the nucleoplasm. The protein localises to the nucleolus. Functionally, acts as a chaperonin for the core histones H3, H2B and H4. Associated with nucleolar ribonucleoprotein structures and bind single-stranded nucleic acids. It may function in the assembly and/or transport of ribosome. May stimulate endonuclease activity on apurinic/apyrimidinic (AP) double-stranded DNA. May inhibit endonuclease activity on AP single-stranded RNA. This chain is Nucleophosmin (npm1), found in Xenopus laevis (African clawed frog).